Consider the following 230-residue polypeptide: Somatolactin (230 aa).

The first 25 residues, 1–25 (MHTKVLQQGLWALLLWPHLFTVSVP), serve as a signal peptide directing secretion. 3 disulfides stabilise this stretch: C28-C38, C88-C204, and C221-C229. N144 is a glycosylation site (N-linked (GlcNAc...) asparagine).

The protein belongs to the somatotropin/prolactin family.

The protein localises to the secreted. In terms of biological role, selectively regulates proliferation and morphogenesis of neural-crest derived pigment cells. This chain is Somatolactin, found in Oryzias latipes (Japanese rice fish).